The primary structure comprises 55 residues: Large ribosomal subunit protein bL33 (55 aa).

This sequence belongs to the bacterial ribosomal protein bL33 family.

The polypeptide is Large ribosomal subunit protein bL33 (Gluconobacter oxydans (strain 621H) (Gluconobacter suboxydans)).